The following is a 382-amino-acid chain: ATP phosphoribosyltransferase regulatory subunit (382 aa).

The protein belongs to the class-II aminoacyl-tRNA synthetase family. HisZ subfamily. As to quaternary structure, heteromultimer composed of HisG and HisZ subunits.

The protein localises to the cytoplasm. It participates in amino-acid biosynthesis; L-histidine biosynthesis; L-histidine from 5-phospho-alpha-D-ribose 1-diphosphate: step 1/9. Functionally, required for the first step of histidine biosynthesis. May allow the feedback regulation of ATP phosphoribosyltransferase activity by histidine. In Burkholderia lata (strain ATCC 17760 / DSM 23089 / LMG 22485 / NCIMB 9086 / R18194 / 383), this protein is ATP phosphoribosyltransferase regulatory subunit.